We begin with the raw amino-acid sequence, 192 residues long: Thymidine kinase (192 aa).

ATP-binding positions include 9–16 and 88–91; these read SAMNAGKT and DECH. The active-site Proton acceptor is Glu-89. 4 residues coordinate Zn(2+): Cys-146, Cys-148, Cys-183, and His-186.

The protein belongs to the thymidine kinase family. As to quaternary structure, homotetramer.

It is found in the cytoplasm. It catalyses the reaction thymidine + ATP = dTMP + ADP + H(+). The sequence is that of Thymidine kinase from Blochmanniella floridana.